The sequence spans 184 residues: Coordinator of PRMT5 and differentiation stimulator (184 aa).

Methionine 1 carries the N-acetylmethionine modification. The segment covering 1–14 has biased composition (low complexity); the sequence is MDLQAAGAQAQGAA. The interval 1–136 is disordered; sequence MDLQAAGAQA…PYDADDIQES (136 aa). Basic and acidic residues predominate over residues 42 to 56; that stretch reads SSQERETEKAMDRLA. Phosphoserine is present on residues serine 66 and serine 75. Acidic residues predominate over residues 78-89; sequence EGFAMDEEDSDG.

As to quaternary structure, interacts with PRMT5. Interacts with histone H4; specifically interacts with the N-terminus of histone H4 but not with histone H3. Interacts with CBFB. Found in a complex with PRMT5, RUNX1 and CBFB.

Its subcellular location is the nucleus. Its function is as follows. Histone-binding protein required for histone H4 methyltransferase activity of PRMT5. Specifically required for histone H4 'Arg-3' methylation mediated by PRMT5, but not histone H3 'Arg-8' methylation, suggesting that it modulates the substrate specificity of PRMT5. Specifically interacts with the N-terminus of histone H4 but not with histone H3, suggesting that it acts by promoting the association between histone H4 and PRMT5. Involved in CCNE1 promoter repression. Plays a role in muscle cell differentiation by modulating the recruitment of PRMT5 to the promoter of genes involved in the coordination between cell cycle exit and muscle differentiation. The polypeptide is Coordinator of PRMT5 and differentiation stimulator (COPRS) (Homo sapiens (Human)).